The chain runs to 438 residues: Coenzyme A disulfide reductase (438 aa).

8–33 (GAVAGGATCASQIRRLDKESDIIIFE) lines the FAD pocket. The substrate site is built by threonine 15, glutamine 19, arginine 22, serine 39, and asparagine 42. The active-site Nucleophile is cysteine 43. Residue cysteine 43 is the Redox-active of the active site. Residue lysine 71 participates in substrate binding. 151 to 166 (VLVIGAGYVSLEVLEN) provides a ligand contact to NADP(+). 267–277 (TNVPNIYAIGD) contributes to the FAD binding site. Histidine 299 is a binding site for substrate. Position 419 (tyrosine 419) interacts with FAD. A substrate-binding site is contributed by lysine 427.

It belongs to the class-III pyridine nucleotide-disulfide oxidoreductase family. As to quaternary structure, homodimer. It depends on FAD as a cofactor.

It carries out the reaction NADP(+) + 2 CoA = CoA-disulfide + NADPH + H(+). Functionally, catalyzes specifically the NADPH-dependent reduction of coenzyme A disulfide. This Staphylococcus aureus (strain Mu3 / ATCC 700698) protein is Coenzyme A disulfide reductase.